Reading from the N-terminus, the 526-residue chain is L-aspartate oxidase (526 aa).

FAD-binding positions include 17–20 (TGVA), K40, 49–56 (ATHYAQGG), and D213. R284 (proton donor/acceptor) is an active-site residue. FAD is bound by residues E367 and 383–384 (SL).

It belongs to the FAD-dependent oxidoreductase 2 family. NadB subfamily. It depends on FAD as a cofactor.

It is found in the cytoplasm. The catalysed reaction is L-aspartate + O2 = iminosuccinate + H2O2. Its pathway is cofactor biosynthesis; NAD(+) biosynthesis; iminoaspartate from L-aspartate (oxidase route): step 1/1. Functionally, catalyzes the oxidation of L-aspartate to iminoaspartate, the first step in the de novo biosynthesis of NAD(+). The protein is L-aspartate oxidase (nadB) of Mycobacterium leprae (strain TN).